Consider the following 199-residue polypeptide: Golgi to ER traffic protein 1 (199 aa).

Residues Met1–Ile11 are Lumenal-facing. Residues Leu12–Ser31 traverse the membrane as a helical segment. Residues Thr32–Ile115 lie on the Cytoplasmic side of the membrane. A coiled-coil region spans residues Tyr76–Leu116. The chain crosses the membrane as a helical span at residues Leu116 to Phe136. The Lumenal portion of the chain corresponds to Tyr137–Ala160. Residues Val161–Phe177 form a helical membrane-spanning segment. Residues Ser178 to Glu199 lie on the Cytoplasmic side of the membrane.

Belongs to the WRB/GET1 family. In terms of assembly, component of the Golgi to ER traffic (GET) complex, which is composed of GET1, GET2 and GET3. Within the complex, GET1 and GET2 form a heterotetramer which is stabilized by phosphatidylinositol binding and which binds to the GET3 homodimer.

Its subcellular location is the endoplasmic reticulum membrane. The protein localises to the golgi apparatus membrane. Its function is as follows. Required for the post-translational delivery of tail-anchored (TA) proteins to the endoplasmic reticulum. Together with GET2, acts as a membrane receptor for soluble GET3, which recognizes and selectively binds the transmembrane domain of TA proteins in the cytosol. The GET complex cooperates with the HDEL receptor ERD2 to mediate the ATP-dependent retrieval of resident ER proteins that contain a C-terminal H-D-E-L retention signal from the Golgi to the ER. The chain is Golgi to ER traffic protein 1 from Candida albicans (strain WO-1) (Yeast).